Here is a 337-residue protein sequence, read N- to C-terminus: tRNA N6-adenosine threonylcarbamoyltransferase (337 aa).

His-111 and His-115 together coordinate Fe cation. Residues 134–138, Asp-167, Gly-180, and Asn-272 each bind substrate; that span reads LVSGG. A Fe cation-binding site is contributed by Asp-300.

Belongs to the KAE1 / TsaD family. It depends on Fe(2+) as a cofactor.

It is found in the cytoplasm. It catalyses the reaction L-threonylcarbamoyladenylate + adenosine(37) in tRNA = N(6)-L-threonylcarbamoyladenosine(37) in tRNA + AMP + H(+). Functionally, required for the formation of a threonylcarbamoyl group on adenosine at position 37 (t(6)A37) in tRNAs that read codons beginning with adenine. Is involved in the transfer of the threonylcarbamoyl moiety of threonylcarbamoyl-AMP (TC-AMP) to the N6 group of A37, together with TsaE and TsaB. TsaD likely plays a direct catalytic role in this reaction. The protein is tRNA N6-adenosine threonylcarbamoyltransferase of Methylococcus capsulatus (strain ATCC 33009 / NCIMB 11132 / Bath).